The sequence spans 445 residues: Tubulin alpha-1 chain (445 aa).

Residue glutamine 11 participates in GTP binding. At lysine 40 the chain carries N6-acetyllysine. Positions 71, 140, 144, 145, 179, 206, and 228 each coordinate GTP. Residue glutamate 71 coordinates Mg(2+). Glutamate 254 is an active-site residue.

This sequence belongs to the tubulin family. Dimer of alpha and beta chains. A typical microtubule is a hollow water-filled tube with an outer diameter of 25 nm and an inner diameter of 15 nM. Alpha-beta heterodimers associate head-to-tail to form protofilaments running lengthwise along the microtubule wall with the beta-tubulin subunit facing the microtubule plus end conferring a structural polarity. Microtubules usually have 13 protofilaments but different protofilament numbers can be found in some organisms and specialized cells. Requires Mg(2+) as cofactor. Acetylation of alpha chains at Lys-40 stabilizes microtubules and affects affinity and processivity of microtubule motors. This modification has a role in multiple cellular functions, ranging from cell motility, cell cycle progression or cell differentiation to intracellular trafficking and signaling.

The protein resides in the cytoplasm. It is found in the cytoskeleton. The enzyme catalyses GTP + H2O = GDP + phosphate + H(+). Functionally, tubulin is the major constituent of microtubules, a cylinder consisting of laterally associated linear protofilaments composed of alpha- and beta-tubulin heterodimers. Microtubules grow by the addition of GTP-tubulin dimers to the microtubule end, where a stabilizing cap forms. Below the cap, tubulin dimers are in GDP-bound state, owing to GTPase activity of alpha-tubulin. The sequence is that of Tubulin alpha-1 chain from Stylonychia lemnae (Ciliate).